Reading from the N-terminus, the 357-residue chain is Ribosomal RNA large subunit methyltransferase M (357 aa).

S-adenosyl-L-methionine contacts are provided by residues Ser-190, 223–226, Asp-242, Asp-262, and Asp-278; that span reads APGG. The Proton acceptor role is filled by Lys-307.

This sequence belongs to the class I-like SAM-binding methyltransferase superfamily. RNA methyltransferase RlmE family. RlmM subfamily. Monomer.

Its subcellular location is the cytoplasm. It catalyses the reaction cytidine(2498) in 23S rRNA + S-adenosyl-L-methionine = 2'-O-methylcytidine(2498) in 23S rRNA + S-adenosyl-L-homocysteine + H(+). Functionally, catalyzes the 2'-O-methylation at nucleotide C2498 in 23S rRNA. In Chromohalobacter salexigens (strain ATCC BAA-138 / DSM 3043 / CIP 106854 / NCIMB 13768 / 1H11), this protein is Ribosomal RNA large subunit methyltransferase M.